Consider the following 135-residue polypeptide: S-adenosylmethionine decarboxylase proenzyme (135 aa).

The active-site Schiff-base intermediate with substrate; via pyruvic acid is the Ser63. Ser63 carries the post-translational modification Pyruvic acid (Ser); by autocatalysis. Catalysis depends on His68, which acts as the Proton acceptor; for processing activity. Cys83 functions as the Proton donor; for catalytic activity in the catalytic mechanism.

This sequence belongs to the prokaryotic AdoMetDC family. Type 1 subfamily. Heterotetramer of two alpha and two beta chains arranged as a dimer of alpha/beta heterodimers. It depends on pyruvate as a cofactor. In terms of processing, is synthesized initially as an inactive proenzyme. Formation of the active enzyme involves a self-maturation process in which the active site pyruvoyl group is generated from an internal serine residue via an autocatalytic post-translational modification. Two non-identical subunits are generated from the proenzyme in this reaction, and the pyruvate is formed at the N-terminus of the alpha chain, which is derived from the carboxyl end of the proenzyme. The post-translation cleavage follows an unusual pathway, termed non-hydrolytic serinolysis, in which the side chain hydroxyl group of the serine supplies its oxygen atom to form the C-terminus of the beta chain, while the remainder of the serine residue undergoes an oxidative deamination to produce ammonia and the pyruvoyl group blocking the N-terminus of the alpha chain.

It carries out the reaction S-adenosyl-L-methionine + H(+) = S-adenosyl 3-(methylsulfanyl)propylamine + CO2. It functions in the pathway amine and polyamine biosynthesis; S-adenosylmethioninamine biosynthesis; S-adenosylmethioninamine from S-adenosyl-L-methionine: step 1/1. Catalyzes the decarboxylation of S-adenosylmethionine to S-adenosylmethioninamine (dcAdoMet), the propylamine donor required for the synthesis of the polyamines spermine and spermidine from the diamine putrescine. The protein is S-adenosylmethionine decarboxylase proenzyme of Thermodesulfovibrio yellowstonii (strain ATCC 51303 / DSM 11347 / YP87).